Reading from the N-terminus, the 673-residue chain is Probable multidrug resistance ABC transporter ATP-binding/permease protein YheH (673 aa).

5 helical membrane passes run L18–I38, I146–F166, L223–T243, L245–L265, and L347–V367. In terms of domain architecture, ABC transmembrane type-1 spans L18–L398. An ABC transporter domain is found at V430 to L664. Position 463–470 (G463–S470) interacts with ATP.

Belongs to the ABC transporter superfamily. As to quaternary structure, heterodimer composed of YheH and YheI.

The protein localises to the cell membrane. Its activity is regulated as follows. Inhibited by ortho-vanadate. Involved in the transport of four structurally unrelated drugs, including doxorubicin and mitoxantrone. Transmembrane domains (TMD) form a pore in the membrane and the ATP-binding domain (NBD) is responsible for energy generation. The protein is Probable multidrug resistance ABC transporter ATP-binding/permease protein YheH (yheH) of Bacillus subtilis (strain 168).